Here is a 574-residue protein sequence, read N- to C-terminus: Alpha-farnesene synthase (574 aa).

The Mn(2+) site is built by D326, D330, and E478. A DDXXD motif motif is present at residues 326–330; it reads DDIYD.

Belongs to the terpene synthase family. Tpsd subfamily. The cofactor is Mn(2+).

Its subcellular location is the cytoplasm. The enzyme catalyses (2E,6E)-farnesyl diphosphate = (3E,6E)-alpha-farnesene + diphosphate. It participates in terpene metabolism; oleoresin biosynthesis. Functionally, involved in sesquiterpene (C15) biosynthesis. The major product is alpha-farnesene. This chain is Alpha-farnesene synthase (PT5), found in Pinus taeda (Loblolly pine).